The primary structure comprises 326 residues: Olfactory receptor 10X1 (326 aa).

The Extracellular segment spans residues 1–41 (MVLNVYCCFFQISDIQTMKINQTILKEFILVGFSVYPHVQT). N-linked (GlcNAc...) asparagine glycosylation is present at Asn-21. A helical transmembrane segment spans residues 42-62 (FLFVVFFCLYLLTLAGNLIIM). Topologically, residues 63–70 (GLTWVDRS) are cytoplasmic. The helical transmembrane segment at 71–91 (LHTPMYLFLSALSFSETCYTL) threads the bilayer. Topologically, residues 92–115 (TIVPKMLEDLLAKDRSISVTGCSL) are extracellular. A disulfide bridge links Cys-113 with Cys-205. A helical membrane pass occupies residues 116–136 (QMCFFLGLGGTNCIILTLMGY). The Cytoplasmic segment spans residues 137 to 155 (DRFLAICNPLRYPLLMTNI). Residues 156 to 176 (VCGQLVASACTAGFFISLTET) traverse the membrane as a helical segment. At 177 to 213 (ALIFRDSFCRPNLVKHFFCHMLAVIRLSCIDSNHTEF) the chain is on the extracellular side. Asn-209 is a glycosylation site (N-linked (GlcNAc...) asparagine). Residues 214 to 233 (IITLISVSGLLGTLLLIILT) traverse the membrane as a helical segment. Over 234-253 (DVFIISTVLRIPSAEGKQKA) the chain is Cytoplasmic. Residues 254–274 (FTTCASHLTVVIIHFGFASIV) form a helical membrane-spanning segment. Residues 275-284 (YLKPEASGDD) lie on the Extracellular side of the membrane. The chain crosses the membrane as a helical span at residues 285-305 (TLIAVPYTVITPFLSPIIFSL). Residues 306–326 (RNKDMKNAFRRMMGNTVALKK) are Cytoplasmic-facing.

Belongs to the G-protein coupled receptor 1 family.

It is found in the cell membrane. Odorant receptor. In Homo sapiens (Human), this protein is Olfactory receptor 10X1 (OR10X1).